A 609-amino-acid polypeptide reads, in one-letter code: UvrABC system protein C (609 aa).

Positions Ala19–Val97 constitute a GIY-YIG domain. In terms of domain architecture, UVR spans Glu208–Phe243.

The protein belongs to the UvrC family. As to quaternary structure, interacts with UvrB in an incision complex.

The protein resides in the cytoplasm. Its function is as follows. The UvrABC repair system catalyzes the recognition and processing of DNA lesions. UvrC both incises the 5' and 3' sides of the lesion. The N-terminal half is responsible for the 3' incision and the C-terminal half is responsible for the 5' incision. In Leptospira interrogans serogroup Icterohaemorrhagiae serovar copenhageni (strain Fiocruz L1-130), this protein is UvrABC system protein C.